The following is a 705-amino-acid chain: Probable iron-sulfur-binding oxidoreductase FadF (705 aa).

6 helical membrane-spanning segments follow: residues 4-24, 71-91, 109-129, 146-166, 173-193, and 199-219; these read FLIANALLFLIVTAYAVYLFV, IIHVMFFYGFILVQFGAIDFI, AFTFFQEIVTFLILIAVGWAF, AGLVLIFIGGLMLTVLLGNGM, HGLSWSEPIASGIAFMLSGVG, and VIFYIAWWIHLLFLLSFLVYV. 4Fe-4S ferredoxin-type domains follow at residues 268-298 and 360-391; these read QSQLLDLYACVECGRCTNMCPATGTGKMLSP and GDVITEEEIWACTTCRNCEDQCPVMNEHVDKI. Residues Cys-277, Cys-280, Cys-283, Cys-287, Cys-371, Cys-374, Cys-377, and Cys-381 each coordinate [4Fe-4S] cluster.

The cofactor is [4Fe-4S] cluster.

It is found in the cell membrane. The sequence is that of Probable iron-sulfur-binding oxidoreductase FadF (fadF) from Bacillus subtilis (strain 168).